We begin with the raw amino-acid sequence, 503 residues long: ATP synthase subunit alpha (503 aa).

169 to 176 (GDRQTGKT) is an ATP binding site.

The protein belongs to the ATPase alpha/beta chains family. F-type ATPases have 2 components, CF(1) - the catalytic core - and CF(0) - the membrane proton channel. CF(1) has five subunits: alpha(3), beta(3), gamma(1), delta(1), epsilon(1). CF(0) has three main subunits: a(1), b(2) and c(9-12). The alpha and beta chains form an alternating ring which encloses part of the gamma chain. CF(1) is attached to CF(0) by a central stalk formed by the gamma and epsilon chains, while a peripheral stalk is formed by the delta and b chains.

The protein localises to the cell membrane. The catalysed reaction is ATP + H2O + 4 H(+)(in) = ADP + phosphate + 5 H(+)(out). In terms of biological role, produces ATP from ADP in the presence of a proton gradient across the membrane. The alpha chain is a regulatory subunit. This chain is ATP synthase subunit alpha, found in Macrococcus caseolyticus (strain JCSC5402) (Macrococcoides caseolyticum).